The sequence spans 508 residues: Histidine ammonia-lyase (508 aa).

Residues 141-143 (ASG) constitute a cross-link (5-imidazolinone (Ala-Gly)). A 2,3-didehydroalanine (Ser) modification is found at Ser142.

Belongs to the PAL/histidase family. Post-translationally, contains an active site 4-methylidene-imidazol-5-one (MIO), which is formed autocatalytically by cyclization and dehydration of residues Ala-Ser-Gly.

It is found in the cytoplasm. It carries out the reaction L-histidine = trans-urocanate + NH4(+). Its pathway is amino-acid degradation; L-histidine degradation into L-glutamate; N-formimidoyl-L-glutamate from L-histidine: step 1/3. The sequence is that of Histidine ammonia-lyase (hutH) from Bacillus subtilis (strain 168).